Consider the following 79-residue polypeptide: Conotoxin ba-2281 (79 aa).

A signal peptide spans 1–24 (MNRMGFFLMLTAAVLLTSLVCTEA). Positions 25–52 (TPADESKVKRARWSRIEGSRLFRHRLPK) are excised as a propeptide. 3 disulfide bridges follow: Cys-58–Cys-66, Cys-61–Cys-71, and Cys-65–Cys-76. 4 positions are modified to 4-hydroxyproline: Pro-59, Pro-67, Pro-68, and Pro-73.

Expressed by the venom duct.

It localises to the secreted. The chain is Conotoxin ba-2281 from Conus bayani (Bayan's cone).